The following is a 189-amino-acid chain: MGVFNEYKRLAAGKLLIASANLLESNFKRTVLMMCEHNPQGSLGFILNRPMEFQVREAVAGFDEVDEPLHMGGPVQSNTVHFLHMRGDLIDGSEQILPGLYWGGDREELGYLLNTGVLKPSEIRFFLGYAGWSAGQLEAEFEEGSWYTADATPAMVFSGEYERMWSRTVRSKGGEYQLIANSPELPGLN.

Belongs to the UPF0301 (AlgH) family.

The chain is UPF0301 protein Plut_0637 from Chlorobium luteolum (strain DSM 273 / BCRC 81028 / 2530) (Pelodictyon luteolum).